Here is a 297-residue protein sequence, read N- to C-terminus: MEPRALVTALSLGLSLCSLGLLVTAIFTDHWYETDPRRHKESCERSRAGADPPDQKNRLMPLSHLPLRDSPPLGRRLLPGGPGRSDPESWRSLLGLGGLDAECGRPLFATYSGLWRKCYFLGIDRDIDTLILKGIAQRCTAVKYHFSQPIRLRNIPFNLTKIIQQDEWHLLHLRRITAGFLGMAVAVLLCGCIVATVSFFWEESLTQHVAGLLFLMTGIFCTISLCTYAASVSYDLNRVPKLIYSLPHDVEHGYSWSIFCAWCSLGFIVAAGGLCIAYPFISRTKIAHLKSGRDSTV.

Residues 1–25 form the signal peptide; it reads MEPRALVTALSLGLSLCSLGLLVTA. Residues 26–179 lie on the Extracellular side of the membrane; the sequence is IFTDHWYETD…LLHLRRITAG (154 aa). Residues 41 to 57 show a composition bias toward basic and acidic residues; sequence ESCERSRAGADPPDQKN. The segment at 41-86 is disordered; it reads ESCERSRAGADPPDQKNRLMPLSHLPLRDSPPLGRRLLPGGPGRSD. Low complexity predominate over residues 68 to 79; that stretch reads RDSPPLGRRLLP. A glycan (N-linked (GlcNAc...) asparagine) is linked at Asn-158. A helical transmembrane segment spans residues 180–200; that stretch reads FLGMAVAVLLCGCIVATVSFF. Over 201 to 208 the chain is Cytoplasmic; sequence WEESLTQH. A helical membrane pass occupies residues 209–229; it reads VAGLLFLMTGIFCTISLCTYA. At 230 to 257 the chain is on the extracellular side; the sequence is ASVSYDLNRVPKLIYSLPHDVEHGYSWS. The helical transmembrane segment at 258 to 278 threads the bilayer; sequence IFCAWCSLGFIVAAGGLCIAY. The Cytoplasmic segment spans residues 279 to 297; that stretch reads PFISRTKIAHLKSGRDSTV.

The protein belongs to the TMEM178 family. In terms of assembly, interacts with STIM1.

The protein resides in the endoplasmic reticulum membrane. Acts as a negative regulator of osteoclast differentiation in basal and inflammatory conditions by regulating TNFSF11-induced Ca (2+) fluxes, thereby controlling the induction of NFATC1. This Rattus norvegicus (Rat) protein is Transmembrane protein 178A (Tmem178a).